Reading from the N-terminus, the 419-residue chain is MFMNDQVYDLLRQAVIASRTLVDMSNKTIKNILRNTADHLLENQNTILEANAEDLSRIDPSDQKYDRLKLTKERLQTMADDMRSVAVLSSPIGKVLHEITRPNGMLIRKVSVPFGVIGIIYEARPNVTFDVFSLCFKSGNACVLKGGSDASLSNHALVNIIHQVLQKYRININTCILLPPNREVTAALLGAVGLVDLIIPRGSSSLINFVRNNTRVPVIETGAGICHTYFDKKGDKDKGRAIINNAKTRRVSVCNALDCLVLHRERLNDLPYICGDLQKNNVIIYADEPSYKVLVTCYPANLIQLAVEESFGTEFLDYKMSIRTVNNIREAIDHITRYSSKHSECIVSESPKTINFFLQKIDAACVYANVSTAFTDGSQFGMGAEIGISTQKLHARGPMALEELTTYKYLIEGSGQIRS.

This sequence belongs to the gamma-glutamyl phosphate reductase family.

The protein localises to the cytoplasm. It catalyses the reaction L-glutamate 5-semialdehyde + phosphate + NADP(+) = L-glutamyl 5-phosphate + NADPH + H(+). It participates in amino-acid biosynthesis; L-proline biosynthesis; L-glutamate 5-semialdehyde from L-glutamate: step 2/2. Functionally, catalyzes the NADPH-dependent reduction of L-glutamate 5-phosphate into L-glutamate 5-semialdehyde and phosphate. The product spontaneously undergoes cyclization to form 1-pyrroline-5-carboxylate. The protein is Gamma-glutamyl phosphate reductase of Azobacteroides pseudotrichonymphae genomovar. CFP2.